Here is a 251-residue protein sequence, read N- to C-terminus: Type III pantothenate kinase (251 aa).

6–13 (DCGNSFIK) lines the ATP pocket. Residues Tyr93 and 100–103 (GLDR) each bind substrate. Asp102 serves as the catalytic Proton acceptor. Asp122 contacts K(+). Thr125 is an ATP binding site. Thr182 is a substrate binding site.

The protein belongs to the type III pantothenate kinase family. In terms of assembly, homodimer. Requires NH4(+) as cofactor. The cofactor is K(+).

It localises to the cytoplasm. It catalyses the reaction (R)-pantothenate + ATP = (R)-4'-phosphopantothenate + ADP + H(+). The protein operates within cofactor biosynthesis; coenzyme A biosynthesis; CoA from (R)-pantothenate: step 1/5. Functionally, catalyzes the phosphorylation of pantothenate (Pan), the first step in CoA biosynthesis. In Azotobacter vinelandii (strain DJ / ATCC BAA-1303), this protein is Type III pantothenate kinase.